A 108-amino-acid chain; its full sequence is Thioredoxin (108 aa).

The Thioredoxin domain maps to 2–108 (NKIIELTDQN…LKEFLDENIN (107 aa)). Cys-32 and Cys-35 are disulfide-bonded.

The protein belongs to the thioredoxin family.

Functionally, participates in various redox reactions through the reversible oxidation of its active center dithiol to a disulfide and catalyzes dithiol-disulfide exchange reactions. In Buchnera aphidicola subsp. Acyrthosiphon pisum (strain APS) (Acyrthosiphon pisum symbiotic bacterium), this protein is Thioredoxin (trxA).